A 319-amino-acid chain; its full sequence is Coproporphyrin III ferrochelatase 2 (319 aa).

Fe-coproporphyrin III-binding positions include tyrosine 13, arginine 30, 46–47 (RY), serine 54, and tyrosine 125. Histidine 181 and glutamate 262 together coordinate Fe(2+).

The protein belongs to the ferrochelatase family.

Its subcellular location is the cytoplasm. The catalysed reaction is Fe-coproporphyrin III + 2 H(+) = coproporphyrin III + Fe(2+). The protein operates within porphyrin-containing compound metabolism; protoheme biosynthesis. Its function is as follows. Involved in coproporphyrin-dependent heme b biosynthesis. Catalyzes the insertion of ferrous iron into coproporphyrin III to form Fe-coproporphyrin III. This Bacillus cereus (strain ZK / E33L) protein is Coproporphyrin III ferrochelatase 2.